The following is a 150-amino-acid chain: Large-conductance mechanosensitive channel (150 aa).

2 consecutive transmembrane segments (helical) span residues 14 to 34 (VIDLAVGVIIGGAFGKIVTSL) and 81 to 101 (GLFINNVVDFLIIAFTIFIVI).

This sequence belongs to the MscL family. As to quaternary structure, homopentamer.

The protein resides in the cell membrane. Its function is as follows. Channel that opens in response to stretch forces in the membrane lipid bilayer. May participate in the regulation of osmotic pressure changes within the cell. This is Large-conductance mechanosensitive channel from Desulfitobacterium hafniense (strain DSM 10664 / DCB-2).